Here is a 141-residue protein sequence, read N- to C-terminus: MATIAQLIRKPRRHKVKKSKSPALQVNLNTLEKKVTSKSSPFKRGVCTRVGTMTPKKPNSALRKYAKVKLTNGMEVLAYIPGEGHNLQEHSVVLIRGGRVKDLPGVRYHIVRGTLDTTGVDKRRQQRSAYGAKRPKADKKK.

Residues threonine 118–lysine 141 form a disordered region.

It belongs to the universal ribosomal protein uS12 family. Part of the 30S ribosomal subunit. Contacts proteins S8 and S17. May interact with IF1 in the 30S initiation complex.

Its function is as follows. With S4 and S5 plays an important role in translational accuracy. Functionally, interacts with and stabilizes bases of the 16S rRNA that are involved in tRNA selection in the A site and with the mRNA backbone. Located at the interface of the 30S and 50S subunits, it traverses the body of the 30S subunit contacting proteins on the other side and probably holding the rRNA structure together. The combined cluster of proteins S8, S12 and S17 appears to hold together the shoulder and platform of the 30S subunit. This Mycoplasmoides gallisepticum (strain R(low / passage 15 / clone 2)) (Mycoplasma gallisepticum) protein is Small ribosomal subunit protein uS12.